Consider the following 489-residue polypeptide: Glutamate--tRNA ligase (489 aa).

The 'HIGH' region motif lies at 11–21 (PSPTGHLHIGG). The Zn(2+) site is built by Cys108, Cys110, Cys136, and His138. The 'KMSKS' region motif lies at 253–257 (KLSKR). Lys256 provides a ligand contact to ATP.

The protein belongs to the class-I aminoacyl-tRNA synthetase family. Glutamate--tRNA ligase type 1 subfamily. As to quaternary structure, monomer. Zn(2+) serves as cofactor.

Its subcellular location is the cytoplasm. The enzyme catalyses tRNA(Glu) + L-glutamate + ATP = L-glutamyl-tRNA(Glu) + AMP + diphosphate. Catalyzes the attachment of glutamate to tRNA(Glu) in a two-step reaction: glutamate is first activated by ATP to form Glu-AMP and then transferred to the acceptor end of tRNA(Glu). In Geobacillus thermodenitrificans (strain NG80-2), this protein is Glutamate--tRNA ligase.